Here is a 136-residue protein sequence, read N- to C-terminus: Aspartate 1-decarboxylase (136 aa).

Serine 25 (schiff-base intermediate with substrate; via pyruvic acid) is an active-site residue. At serine 25 the chain carries Pyruvic acid (Ser). Threonine 57 lines the substrate pocket. Catalysis depends on tyrosine 58, which acts as the Proton donor. Position 73 to 75 (73 to 75) interacts with substrate; sequence GAA.

This sequence belongs to the PanD family. Heterooctamer of four alpha and four beta subunits. The cofactor is pyruvate. Is synthesized initially as an inactive proenzyme, which is activated by self-cleavage at a specific serine bond to produce a beta-subunit with a hydroxyl group at its C-terminus and an alpha-subunit with a pyruvoyl group at its N-terminus.

It is found in the cytoplasm. The catalysed reaction is L-aspartate + H(+) = beta-alanine + CO2. It functions in the pathway cofactor biosynthesis; (R)-pantothenate biosynthesis; beta-alanine from L-aspartate: step 1/1. Functionally, catalyzes the pyruvoyl-dependent decarboxylation of aspartate to produce beta-alanine. This Corynebacterium glutamicum (strain R) protein is Aspartate 1-decarboxylase.